The following is a 405-amino-acid chain: Argininosuccinate synthase (405 aa).

Residue 9-17 (AYSGGLDTS) coordinates ATP. The L-citrulline site is built by Tyr87 and Ser92. Gly117 serves as a coordination point for ATP. 3 residues coordinate L-aspartate: Thr119, Asn123, and Asp124. Asn123 provides a ligand contact to L-citrulline. L-citrulline is bound by residues Arg127, Ser176, Ser185, Glu262, and Tyr274.

The protein belongs to the argininosuccinate synthase family. Type 1 subfamily. As to quaternary structure, homotetramer.

It localises to the cytoplasm. The catalysed reaction is L-citrulline + L-aspartate + ATP = 2-(N(omega)-L-arginino)succinate + AMP + diphosphate + H(+). Its pathway is amino-acid biosynthesis; L-arginine biosynthesis; L-arginine from L-ornithine and carbamoyl phosphate: step 2/3. The polypeptide is Argininosuccinate synthase (Caldicellulosiruptor saccharolyticus (strain ATCC 43494 / DSM 8903 / Tp8T 6331)).